Consider the following 738-residue polypeptide: Photosystem I P700 chlorophyll a apoprotein A2 (738 aa).

The next 8 membrane-spanning stretches (helical) occupy residues 46–69 (LFST…FHIA), 135–158 (LYQG…LHLQ), 175–199 (LNHH…HVAI), 273–291 (IAHH…GHMY), 333–356 (LHFQ…QHMY), 372–398 (AALY…IFFI), 420–442 (AIIS…LYVH), and 521–539 (FLVH…LILV). [4Fe-4S] cluster-binding residues include cysteine 563 and cysteine 572. 2 helical membrane passes run 579–600 (AFYL…YWHW) and 647–669 (LAVW…MFLI). The chlorophyll a site is built by histidine 658, methionine 666, and tyrosine 674. Tryptophan 675 is a phylloquinone binding site. A helical transmembrane segment spans residues 711 to 731 (VVGLAHFTIGYILTYAAFLIA).

This sequence belongs to the PsaA/PsaB family. The PsaA/B heterodimer binds the P700 chlorophyll special pair and subsequent electron acceptors. PSI consists of a core antenna complex that captures photons, and an electron transfer chain that converts photonic excitation into a charge separation. The cyanobacterial PSI reaction center is composed of one copy each of PsaA,B,C,D,E,F,I,J,K,L,M and X, and forms trimeric complexes. PSI electron transfer chain: 5 chlorophyll a, 1 chlorophyll a', 2 phylloquinones and 3 4Fe-4S clusters. PSI core antenna: 90 chlorophyll a, 22 carotenoids, 3 phospholipids and 1 galactolipid. P700 is a chlorophyll a/chlorophyll a' dimer, A0 is one or more chlorophyll a, A1 is one or both phylloquinones and FX is a shared 4Fe-4S iron-sulfur center. serves as cofactor.

It localises to the cellular thylakoid membrane. It catalyses the reaction reduced [plastocyanin] + hnu + oxidized [2Fe-2S]-[ferredoxin] = oxidized [plastocyanin] + reduced [2Fe-2S]-[ferredoxin]. PsaA and PsaB bind P700, the primary electron donor of photosystem I (PSI), as well as the electron acceptors A0, A1 and FX. PSI is a plastocyanin/cytochrome c6-ferredoxin oxidoreductase, converting photonic excitation into a charge separation, which transfers an electron from the donor P700 chlorophyll pair to the spectroscopically characterized acceptors A0, A1, FX, FA and FB in turn. Oxidized P700 is reduced on the lumenal side of the thylakoid membrane by plastocyanin or cytochrome c6. This is Photosystem I P700 chlorophyll a apoprotein A2 from Synechococcus sp. (strain WH7803).